Consider the following 516-residue polypeptide: MSAKKPVVLLILDGYGYSERTKYNAVYAAQTPVYDNLWKTCPNTLIDTSGMAVGLPAGQMGNSEVGHTTIGAGRVVYQSFTRINKSISDGDFFTNPEYVKAIDSAIANDRAVHILGLLSEGGVHSHQDHLYAMINMAVERGAKQVYLHAFLDGRDTPPRSAEASLQKAQDVFAKLGTGRVASIVGRYFALDRDNRWDRVKTAYDVMVTGEAEFDALTAVDGLKAAYERGENDEFVKATVICGEDEEVATINDGDSVIFMNFRPDRAREITRALIDENFTGFDRGETHPAIAHFVQTTEYASDIKAPIAFPPEDLSNSFGEYIAGLGKTQLRIAETEKYAHVTFFFNGGNEVVYPGEDRILVPSPKVATYDLQPEMSAPEVTDKLVEAIESGKYDAIICNYANCDMVGHSGLFDAAVKAVEAVDVALGRVLAAVKKVDGEALITADHGNVEEMFDEETGQPHTQHSTLPVPFIFVSSRKGKLASGGSLADVAPTILALMDLPQPKEMTGRNLITLEG.

Residues Asp-13 and Ser-63 each contribute to the Mn(2+) site. The active-site Phosphoserine intermediate is Ser-63. Residues His-124, 154 to 155, Arg-186, Arg-192, 262 to 265, and Lys-337 contribute to the substrate site; these read RD and RPDR. Mn(2+)-binding residues include Asp-404, His-408, Asp-445, His-446, and His-464.

Belongs to the BPG-independent phosphoglycerate mutase family. Monomer. Mn(2+) is required as a cofactor.

It catalyses the reaction (2R)-2-phosphoglycerate = (2R)-3-phosphoglycerate. It functions in the pathway carbohydrate degradation; glycolysis; pyruvate from D-glyceraldehyde 3-phosphate: step 3/5. In terms of biological role, catalyzes the interconversion of 2-phosphoglycerate and 3-phosphoglycerate. In Cellvibrio japonicus (strain Ueda107) (Pseudomonas fluorescens subsp. cellulosa), this protein is 2,3-bisphosphoglycerate-independent phosphoglycerate mutase.